The primary structure comprises 1972 residues: TP53-binding protein 1 (1972 aa).

3 disordered regions span residues 24–273 (DSQP…VAAM), 290–332 (QIQK…CSLA), and 346–507 (GQRS…LGLS). Residues Ser-25 and Ser-63 each carry the phosphoserine modification. Positions 82–91 (EHLKENKVAD) are enriched in basic and acidic residues. Residues 94–121 (DSSNLDTCGSISQVIEQLPQPNRTSSVL) show a composition bias toward polar residues. Phosphoserine occurs at positions 105 and 124. A compositionally biased stretch (basic and acidic residues) spans 138–149 (ELEQKEKEKEED). Residues 151–168 (SGNTTHSLGAEDTASSQL) are compositionally biased toward polar residues. Phosphoserine occurs at positions 166, 176, and 178. Residues 195-205 (LQSVTTNSGYT) are compositionally biased toward polar residues. Lys-217 is covalently cross-linked (Glycyl lysine isopeptide (Lys-Gly) (interchain with G-Cter in SUMO1); alternate). Lys-217 is covalently cross-linked (Glycyl lysine isopeptide (Lys-Gly) (interchain with G-Cter in SUMO2); alternate). A phosphoserine mark is found at Ser-222, Ser-265, and Ser-294. Composition is skewed to polar residues over residues 300–322 (LSTQ…CSTP) and 346–361 (GQRS…NSSD). At Thr-302 the chain carries Phosphothreonine. Phosphoserine is present on residues Ser-366, Ser-380, Ser-395, Ser-398, Ser-429, Ser-452, and Ser-464. Residues 426 to 441 (STVSPQASTPISQSTP) are compositionally biased toward polar residues. Positions 442 to 452 (VFPPGSLPIPS) are enriched in pro residues. Residues 481-490 (HSSSLTVECS) show a composition bias toward polar residues. Residues 491-501 (KTSEIEPKNSP) are compositionally biased toward basic and acidic residues. A phosphoserine mark is found at Ser-500, Ser-507, Ser-518, Ser-523, and Ser-525. The span at 520 to 531 (SEYSQSPKMESL) shows a compositional bias: polar residues. A disordered region spans residues 520 to 556 (SEYSQSPKMESLSSHRIDEDGENTQIEDTEPMSPVLN). The segment covering 538-549 (EDGENTQIEDTE) has biased composition (acidic residues). Phosphothreonine is present on residues Thr-543 and Thr-548. Phosphoserine is present on residues Ser-552, Ser-566, and Ser-580. A disordered region spans residues 568–595 (LMNPAQDGEVQLSQNDDKTKGDDTDTRD). The segment covering 582-595 (NDDKTKGDDTDTRD) has biased composition (basic and acidic residues). Phosphoserine is present on residues Ser-630, Ser-635, Ser-639, and Ser-640. Residues 649–687 (EIKEHHPEEGSSGSEVEEIPETPCESQGEELKEENMESV) are disordered. Thr-670 bears the Phosphothreonine mark. Ser-692, Ser-724, Ser-727, Ser-771, Ser-809, Ser-830, Ser-831, and Ser-834 each carry phosphoserine. The disordered stretch occupies residues 742–911 (EQEAWEEATS…TPFHFTLPKE (170 aa)). Basic and acidic residues predominate over residues 798–816 (AENRLDTKEEKSVEYEGDL). The segment covering 839–848 (RADDPLRLDQ) has biased composition (basic and acidic residues). A compositionally biased stretch (polar residues) spans 849–864 (ELQQPQTQEKTSNSLT). The residue at position 855 (Thr-855) is a Phosphothreonine. Residue Lys-868 forms a Glycyl lysine isopeptide (Lys-Gly) (interchain with G-Cter in SUMO1); alternate linkage. Lys-868 is covalently cross-linked (Glycyl lysine isopeptide (Lys-Gly) (interchain with G-Cter in SUMO2); alternate). A compositionally biased stretch (polar residues) spans 890–902 (HASQSFCESSSET). Thr-922 bears the Phosphothreonine mark. A Glycyl lysine isopeptide (Lys-Gly) (interchain with G-Cter in SUMO2) cross-link involves residue Lys-930. Residues Ser-970 and Ser-975 each carry the phosphoserine modification. Residue Lys-984 forms a Glycyl lysine isopeptide (Lys-Gly) (interchain with G-Cter in SUMO2) linkage. Disordered regions lie at residues 997–1028 (EASE…SVAS) and 1045–1103 (ENEA…VSPA). Residues 1018–1028 (GSTAVAESVAS) show a composition bias toward polar residues. A Phosphoserine modification is found at Ser-1028. A Phosphothreonine modification is found at Thr-1056. Phosphoserine is present on Ser-1068. Residues 1071 to 1083 (EEEKEKLEGDHTI) show a composition bias toward basic and acidic residues. Residues Ser-1086, Ser-1094, Ser-1101, and Ser-1114 each carry the phosphoserine modification. Residues 1127–1139 (DQKEGRSTNKENP) show a composition bias toward basic and acidic residues. 3 disordered regions span residues 1127–1148 (DQKE…ERPS), 1188–1232 (NFGK…QPPH), and 1269–1478 (VTEE…DGLD). A Phosphoserine modification is found at Ser-1148. Over residues 1188–1200 (NFGKQDATVQTER) the composition is skewed to polar residues. At Thr-1214 the chain carries Phosphothreonine. Phosphoserine occurs at positions 1216 and 1219. Positions 1272-1285 (ETEEPIVECQECET) are enriched in acidic residues. Low complexity-rich tracts occupy residues 1298-1307 (DLGDISSFSS) and 1316-1329 (SSGT…SSGS). 2 positions are modified to phosphoserine: Ser-1317 and Ser-1342. The residue at position 1355 (Arg-1355) is an Omega-N-methylarginine. At Ser-1362 the chain carries Phosphoserine. Residue Lys-1365 forms a Glycyl lysine isopeptide (Lys-Gly) (interchain with G-Cter in SUMO2) linkage. Position 1368 is a phosphoserine (Ser-1368). Thr-1372 carries the post-translational modification Phosphothreonine. A GAR motif is present at residues 1396 to 1403 (RGRGRRGR). Phosphoserine occurs at positions 1426 and 1430. A Glycyl lysine isopeptide (Lys-Gly) (interchain with G-Cter in SUMO1); alternate cross-link involves residue Lys-1434. Lys-1434 participates in a covalent cross-link: Glycyl lysine isopeptide (Lys-Gly) (interchain with G-Cter in SUMO2); alternate. A phosphoserine mark is found at Ser-1460, Ser-1462, and Ser-1474. The segment at 1484–1603 (NSFVGLRVVA…NRLREQYGLG (120 aa)) is tudor-like. The interaction with dimethylated histone H4 stretch occupies residues 1495–1523 (WSSNGYFYSGKITRDVGAGKYKLLFDDGY). Lys-1563 is covalently cross-linked (Glycyl lysine isopeptide (Lys-Gly) (interchain with G-Cter in SUMO1); alternate). Lys-1563 is covalently cross-linked (Glycyl lysine isopeptide (Lys-Gly) (interchain with G-Cter in SUMO2); alternate). The UDR signature appears at 1604-1631 (PYEAVTPLTKAADISLDNLVEGKRKRRS). A Phosphothreonine modification is found at Thr-1609. Phosphoserine is present on residues Ser-1618, Ser-1631, and Ser-1635. Disordered stretches follow at residues 1622–1719 (LVEG…EEQR) and 1745–1768 (LASR…FLEI). Over residues 1634–1650 (SSPATPTASSSSSTTPT) the composition is skewed to low complexity. Phosphothreonine is present on residues Thr-1638 and Thr-1648. Ser-1656, Ser-1673, and Ser-1678 each carry phosphoserine. Lys-1685 is covalently cross-linked (Glycyl lysine isopeptide (Lys-Gly) (interchain with G-Cter in ubiquitin)). A phosphoserine mark is found at Ser-1701, Ser-1759, and Ser-1778. BRCT domains follow at residues 1724–1848 (LNKT…NYLL) and 1864–1964 (PREN…QHPK).

Homoligomer. Interacts with p53/TP53 (via the central domain). Interacts with DCLRE1C. Interacts with histone H2AX and this requires phosphorylation of H2AX on 'Ser-139'. Interacts with histone H4 that has been dimethylated at 'Lys-20' (H4K20me2). Has low affinity for histone H4 containing monomethylated 'Lys-20' (H4K20me1). Does not bind histone H4 containing unmethylated or trimethylated 'Lys-20' (H4K20me3). Has low affinity for histone H3 that has been dimethylated on 'Lys-79'. Has very low affinity for histone H3 that has been monomethylated on 'Lys-79' (in vitro). Does not bind unmethylated histone H3. Interacts with histone H2A monoubiquitinated at 'Lys-15' (H2AK15Ub). Interacts with PWWP3A/EXPAND1. Interacts with CHEK2; modulates CHEK2 phosphorylation at 'Thr-68' in response to infrared. Interacts with MSL1; this interaction may be required for MSL1 DNA repair activity, but not for histone acetyltransferase activity. Interacts (when phosphorylated by ATM) with RIF1. Interacts (via the Tudor-like domain) with NUDT16L1/TIRR; interaction masks the Tudor-like domain and prevents recruitment to chromatin. Interacts with PAXIP1. Interacts with SHLD2. Interacts (when phosphorylated) with TOPBP1. Interacts with GFI1; promoting methylation by PRMT1. Interacts with (phosphorylated) DYNLL1; specifically binds DYNLL1 phosphorylated at 'Ser-88' and promotes its recruitment to double stand breaks (DSBs). As to quaternary structure, (Microbial infection) Interacts (via C-terminus) with Epstein-Barr virus lytic switch protein BZLF1 (via C-terminus); this interaction is involved in the activation of the viral lytic cycle. In terms of processing, asymmetrically dimethylated on Arg residues by PRMT1. Methylation is required for DNA binding. Post-translationally, phosphorylated at basal level in the absence of DNA damage. Phosphorylated by ATM in response to DNA damage: phosphorylation at different sites promotes interaction with different set of proteins: phosphorylation at the N-terminus by ATM (residues from 6-178) promotes interaction with PAXIP1 and non-homologous end joining (NHEJ) of dysfunctional telomeres. Phosphorylation by ATM at residues that are located more C-terminus (residues 300-650) leads to promote interaction with RIF1. Interaction with RIF1 leads to disrupt interaction with NUDT16L1/TIRR. Phosphorylation at Thr-1609 and Ser-1618 in the UDR motif blocks interaction with H2AK15ub. Dephosphorylated by PPP4C. Hyperphosphorylation during mitosis correlates with its exclusion from chromatin and DNA lesions. Hyperphosphorylated in an ATR-dependent manner in response to DNA damage induced by UV irradiation. Dephosphorylated by PPP5C. Phosphorylation at Ser-366 and Thr-670 promotes interaction with TOPBP1. Phosphorylated by VRK1. Monoubiquitinated at Lys-1685 by MSL2 is reponse to DNA damage, leading to its stabilization.

It is found in the nucleus. Its subcellular location is the chromosome. The protein localises to the centromere. The protein resides in the kinetochore. Its function is as follows. Double-strand break (DSB) repair protein involved in response to DNA damage, telomere dynamics and class-switch recombination (CSR) during antibody genesis. Plays a key role in the repair of double-strand DNA breaks (DSBs) in response to DNA damage by promoting non-homologous end joining (NHEJ)-mediated repair of DSBs and specifically counteracting the function of the homologous recombination (HR) repair protein BRCA1. In response to DSBs, phosphorylation by ATM promotes interaction with RIF1 and dissociation from NUDT16L1/TIRR, leading to recruitment to DSBs sites. Recruited to DSBs sites by recognizing and binding histone H2A monoubiquitinated at 'Lys-15' (H2AK15Ub) and histone H4 dimethylated at 'Lys-20' (H4K20me2), two histone marks that are present at DSBs sites. Required for immunoglobulin class-switch recombination (CSR) during antibody genesis, a process that involves the generation of DNA DSBs. Participates in the repair and the orientation of the broken DNA ends during CSR. In contrast, it is not required for classic NHEJ and V(D)J recombination. Promotes NHEJ of dysfunctional telomeres via interaction with PAXIP1. The protein is TP53-binding protein 1 of Homo sapiens (Human).